We begin with the raw amino-acid sequence, 292 residues long: Ribonuclease T2-like (292 aa).

The first 23 residues, 1 to 23, serve as a signal peptide directing secretion; it reads MAKTASAMLFLYLLLSRCLLSHA. Disulfide bonds link C42/C61, C50/C103, C60/C177, C111/C169, and C246/C280. N52 carries an N-linked (GlcNAc...) asparagine glycan. Catalysis depends on residues H96, E162, and H166.

The protein belongs to the RNase T2 family.

It is found in the vacuole lumen. It localises to the cytoplasm. It catalyses the reaction a ribonucleotidyl-ribonucleotide-RNA + H2O = a 3'-end 3'-phospho-ribonucleotide-RNA + a 5'-end dephospho-ribonucleoside-RNA + H(+). Functionally, rnase which modulates cell survival under stress conditions. Released from the vacuole to the cytoplasm during stress to promote tRNA and rRNA cleavage and to activate separately a downstream pathway that promotes cell death. Involved in cell size, vacuolar morphology and growth at high temperatures and high salt concentration. The chain is Ribonuclease T2-like (RNY1) from Eremothecium gossypii (strain ATCC 10895 / CBS 109.51 / FGSC 9923 / NRRL Y-1056) (Yeast).